The sequence spans 708 residues: MPRVSAEILDISHTGGNESPTLGELLKDFNDSGRKKYPGENAPTQHILDLAPAAETRSVPFLLSFNNLSYNVVLRRRFDFSRRKTASVKTLLDDITGEARDGEILAVLGGSGAGKSTLIDALAGRVAEDSLKGTVTLNGEKVLQSRLLKVISAYVMQDDLLFPMLTVKETLMFASEFRLPRSLPKSKKMERVETLIDQLGLRNAADTVIGDEGHRGVSGGERRRVSIGIDIIHDPILLFLDEPTSGLDSTNAFMVVQVLKRIAQSGSVVIMSIHQPSARIIGLLDRLIILSHGKSVFNGSPVSLPSFFSSFGRPIPEKENITEFALDVIRELEGSSEGTRDLVEFNEKWQQNQTARATTQSRVSLKEAIAASVSRGKLVSGSSGANPISMETVSSYANPPLAETFILAKRYIKNWIRTPELIGMRIGTVMVTGLLLATVYWRLDNTPRGAQERMGFFAFGMSTMFYCCADNIPVFIQERYIFLRETTHNAYRTSSYVISHALVSLPQLLALSIAFAATTFWTVGLSGGLESFFYYCLIIYAAFWSGSSIVTFISGLIPNVMMSYMVTIAYLSYCLLLGGFYINRDRIPLYWIWFHYISLLKYPYEAVLINEFDDPSRCFVKGVQVFDGTLLAEVSHVMKVKLLDTLSGSLGTKITESTCLRTGPDLLMQQGITQLSKWDCLWITLAWGLFFRILFYLSLLFGSKNKRT.

One can recognise an ABC transporter domain in the interval 75–317; it reads RRRFDFSRRK…FSSFGRPIPE (243 aa). ATP is bound at residue 109-116; it reads GGSGAGKS. The ABC transmembrane type-2 domain maps to 402-612; that stretch reads AETFILAKRY…PYEAVLINEF (211 aa). 7 helical membrane-spanning segments follow: residues 421-441, 456-476, 508-528, 537-557, 560-580, 589-609, and 681-701; these read LIGM…TVYW, FFAF…PVFI, LLAL…LSGG, LIIY…SGLI, VMMS…LGGF, LYWI…AVLI, and LWIT…SLLF.

Belongs to the ABC transporter superfamily. ABCG family. Eye pigment precursor importer (TC 3.A.1.204) subfamily.

Its subcellular location is the membrane. This is ABC transporter G family member 18 (ABCG18) from Arabidopsis thaliana (Mouse-ear cress).